A 455-amino-acid polypeptide reads, in one-letter code: MNRNTSSLWADCLLQLQDQVPADKFQMWLRPLQADISSPNQLTIYVQNFFSRQWVENNYLADITKLARQLTGNPDFVVKLVEGVKPAPKQNNIVTTKQNAETAVDSEQHLQSVEFKTGLNSNHLFENFVEGKSNQLARAVGIKVANNPGDKTANPLFLYGGTGLGKTHLLHAVGNGILANNPKARVLYIHAERFVQEYVKATKLGAAENFKKFYRNLDALLIDDIQFFAGKELTQEEFFNTFNNLFEGEKQIILTSDRYPREIEKIEDRLKSRFSWGLSVAIEPPELETRVAILMKKAEERGVNLAEEVAFFIGQKLRTHVRELEGALNRVIANAEFTGKTITIDFVRDTLKDMLALQDKLVTIDNIQKVVAEYYRIKVSDLNSKNRSRSVARPRQLAMALAKELTNRSFPEIGKNFGGKDHTTVIYACDKIQELRETDSSIQEDWSNLIRTLSA.

The segment at 1-82 is domain I, interacts with DnaA modulators; sequence MNRNTSSLWA…NPDFVVKLVE (82 aa). The interval 82–117 is domain II; it reads EGVKPAPKQNNIVTTKQNAETAVDSEQHLQSVEFKT. The tract at residues 118–335 is domain III, AAA+ region; that stretch reads GLNSNHLFEN…GALNRVIANA (218 aa). Residues Gly163, Gly165, Lys166, and Thr167 each coordinate ATP. The interval 336–455 is domain IV, binds dsDNA; that stretch reads EFTGKTITID…WSNLIRTLSA (120 aa).

This sequence belongs to the DnaA family. In terms of assembly, oligomerizes as a right-handed, spiral filament on DNA at oriC.

It localises to the cytoplasm. Functionally, plays an essential role in the initiation and regulation of chromosomal replication. ATP-DnaA binds to the origin of replication (oriC) to initiate formation of the DNA replication initiation complex once per cell cycle. Binds the DnaA box (a 9 base pair repeat at the origin) and separates the double-stranded (ds)DNA. Forms a right-handed helical filament on oriC DNA; dsDNA binds to the exterior of the filament while single-stranded (ss)DNA is stabiized in the filament's interior. The ATP-DnaA-oriC complex binds and stabilizes one strand of the AT-rich DNA unwinding element (DUE), permitting loading of DNA polymerase. After initiation quickly degrades to an ADP-DnaA complex that is not apt for DNA replication. Binds acidic phospholipids. This is Chromosomal replication initiator protein DnaA from Actinobacillus succinogenes (strain ATCC 55618 / DSM 22257 / CCUG 43843 / 130Z).